We begin with the raw amino-acid sequence, 442 residues long: Cyclic AMP receptor-like protein B (442 aa).

At 1-16 (MGGDIHLCSMILGKNH) the chain is on the extracellular side. Residues 17–37 (LIFLYFANLFGSTLSFLATII) traverse the membrane as a helical segment. At 38 to 219 (TIVFYLVKKY…PKKIDTLIFY (182 aa)) the chain is on the cytoplasmic side. The segment at 83 to 166 (YSSTPISIQN…LSSSDKNNTI (84 aa)) is disordered. A compositionally biased stretch (low complexity) spans 91–103 (QNNNNKNNNLPKQ). The segment covering 112–122 (INKNHNNYCNY) has biased composition (polar residues). Over residues 123-144 (STSATSSSSSSSSFSSTNSGSS) the composition is skewed to low complexity. The segment covering 145–166 (YEYQQPQKNQQTLSSSDKNNTI) has biased composition (polar residues). A helical membrane pass occupies residues 220-240 (LSISDFIAVSGIIIEQLIIIF). Topologically, residues 241–255 (NKEISKSIGFCIGER) are extracellular. The helical transmembrane segment at 256–276 (VSIHFGLLATLFWSNCIAYYL) threads the bilayer. Residues 277-289 (LRETYELKPYNIR) lie on the Cytoplasmic side of the membrane. A helical membrane pass occupies residues 290 to 310 (FVYFHIVCWGMALIGVASLFF). Topologically, residues 311–334 (SKIITVSNIDQGGSWCSVSSSYQL) are extracellular. A helical transmembrane segment spans residues 335–355 (YFWVIPLFVSFTWNLICYCLI). Residues 356 to 382 (YRKFNKIIGIYGIQSVQIKTIIIRKLS) lie on the Cytoplasmic side of the membrane. The chain crosses the membrane as a helical span at residues 383 to 403 (FYLLAFLITWVWDVINNSIFL). The Extracellular segment spans residues 404 to 410 (YEGKCPP). Residues 411–431 (FALWILQEFFSSGYGFFNSLA) form a helical membrane-spanning segment. Residues 432–442 (YAVTTRFYSRK) lie on the Cytoplasmic side of the membrane.

Belongs to the G-protein coupled receptor 5 family.

The protein resides in the membrane. Its function is as follows. Receptor for cAMP. The protein is Cyclic AMP receptor-like protein B (crlB) of Dictyostelium discoideum (Social amoeba).